A 47-amino-acid polypeptide reads, in one-letter code: DLRQCTRNAPGSTWGRCCLNPMCGNFCCPRSGCTCAYNWRRGIYCSC.

3 positions are modified to hydroxyproline; partial: Pro-10, Pro-21, and Pro-29. 4 cysteine pairs are disulfide-bonded: Cys-18–Cys-27, Cys-23–Cys-35, Cys-28–Cys-45, and Cys-33–Cys-47.

Homodimer. Pseudo-homodimer (identical sequence, different post-translational modifications). HydroxyPro-10 is only found in a minor form. As to expression, expressed by the venom duct.

Its subcellular location is the secreted. In terms of biological role, alpha-conotoxins act on postsynaptic membranes, they bind to the nicotinic acetylcholine receptors (nAChR) and thus inhibit them. Through its two C-terminal domains, this homodimeric protein would bind to two nAChR allosteric sites, located outside the nAChR C-loop of the principal binding face and at the adjacent binding interface in a clockwise direction. This toxin specifically blocks mammalian neuronal nAChR of the alpha-7/CHRNA7, alpha-3-beta-2/CHRNA3-CHRNB2 and alpha-4-beta-2/CHRNA4-CHRNB2 subtypes. VxXXA and VxXXB inhibit alpha-7/CHRNA7 and alpha-3-beta-2/CHRNA3-CHRNB2 nAChR more efficiently than VxXXC. VxXXB is the most effective at inhibiting alpha-4-beta-2/CHRNA4-CHRNB2 nAChR, followed by VxXXC and VxXXA. In Conus vexillum (Flag cone), this protein is Alpha-conotoxin VxXXC.